The chain runs to 183 residues: Translation initiation factor IF-3 (183 aa).

Residues Met1–Lys13 are compositionally biased toward polar residues. The disordered stretch occupies residues Met1–Asp21.

It belongs to the IF-3 family. As to quaternary structure, monomer.

It is found in the cytoplasm. Functionally, IF-3 binds to the 30S ribosomal subunit and shifts the equilibrium between 70S ribosomes and their 50S and 30S subunits in favor of the free subunits, thus enhancing the availability of 30S subunits on which protein synthesis initiation begins. The sequence is that of Translation initiation factor IF-3 from Acinetobacter baumannii (strain AYE).